Reading from the N-terminus, the 529-residue chain is Peptide chain release factor 3 (529 aa).

A tr-type G domain is found at 10–278; sequence ARRRTFAIIS…NFVDLAPAPR (269 aa). GTP contacts are provided by residues 19–26, 87–91, and 141–144; these read SHPDAGKT, DTPGH, and NKLD.

The protein belongs to the TRAFAC class translation factor GTPase superfamily. Classic translation factor GTPase family. PrfC subfamily.

It is found in the cytoplasm. In terms of biological role, increases the formation of ribosomal termination complexes and stimulates activities of RF-1 and RF-2. It binds guanine nucleotides and has strong preference for UGA stop codons. It may interact directly with the ribosome. The stimulation of RF-1 and RF-2 is significantly reduced by GTP and GDP, but not by GMP. The polypeptide is Peptide chain release factor 3 (Nitratidesulfovibrio vulgaris (strain ATCC 29579 / DSM 644 / CCUG 34227 / NCIMB 8303 / VKM B-1760 / Hildenborough) (Desulfovibrio vulgaris)).